A 545-amino-acid polypeptide reads, in one-letter code: Chromosomal replication initiator protein DnaA (545 aa).

The segment at 1-72 is domain I, interacts with DnaA modulators; it reads MNDFWQHCSA…DMARDFWQAP (72 aa). Residues 72–208 are domain II; it reads PVDVQFVLDP…GETDSMYERS (137 aa). Residues 90 to 105 show a composition bias toward low complexity; the sequence is AAAPAPASARPASAPG. 2 disordered regions span residues 90–112 and 181–204; these read AAAP…GSAG and AAAR…TDSM. Over residues 189–201 the composition is skewed to polar residues; the sequence is PGQSASSNGNGET. A domain III, AAA+ region region spans residues 209-425; that stretch reads KLNPVLTFDN…GALRKILAYS (217 aa). ATP is bound by residues Gly-253, Gly-255, Lys-256, and Thr-257. Positions 426–545 are domain IV, binds dsDNA; the sequence is KFHGREITIE…LHVLEQTLKG (120 aa).

This sequence belongs to the DnaA family. As to quaternary structure, oligomerizes as a right-handed, spiral filament on DNA at oriC.

Its subcellular location is the cytoplasm. Its function is as follows. Plays an essential role in the initiation and regulation of chromosomal replication. ATP-DnaA binds to the origin of replication (oriC) to initiate formation of the DNA replication initiation complex once per cell cycle. Binds the DnaA box (a 9 base pair repeat at the origin) and separates the double-stranded (ds)DNA. Forms a right-handed helical filament on oriC DNA; dsDNA binds to the exterior of the filament while single-stranded (ss)DNA is stabiized in the filament's interior. The ATP-DnaA-oriC complex binds and stabilizes one strand of the AT-rich DNA unwinding element (DUE), permitting loading of DNA polymerase. After initiation quickly degrades to an ADP-DnaA complex that is not apt for DNA replication. Binds acidic phospholipids. The sequence is that of Chromosomal replication initiator protein DnaA from Paraburkholderia phytofirmans (strain DSM 17436 / LMG 22146 / PsJN) (Burkholderia phytofirmans).